Here is a 348-residue protein sequence, read N- to C-terminus: Dihydroorotase (348 aa).

Zn(2+) contacts are provided by His-17 and His-19. Residues 19-21 and Asn-45 each bind substrate; that span reads HLR. Zn(2+) is bound by residues Lys-103, His-140, and His-178. Lys-103 is subject to N6-carboxylysine. His-140 contacts substrate. Leu-223 lines the substrate pocket. Asp-251 contacts Zn(2+). Asp-251 is an active-site residue. Positions 255 and 267 each coordinate substrate.

It belongs to the metallo-dependent hydrolases superfamily. DHOase family. Class II DHOase subfamily. Homodimer. The cofactor is Zn(2+).

The catalysed reaction is (S)-dihydroorotate + H2O = N-carbamoyl-L-aspartate + H(+). It participates in pyrimidine metabolism; UMP biosynthesis via de novo pathway; (S)-dihydroorotate from bicarbonate: step 3/3. Its function is as follows. Catalyzes the reversible cyclization of carbamoyl aspartate to dihydroorotate. The protein is Dihydroorotase of Shigella flexneri.